A 360-amino-acid polypeptide reads, in one-letter code: MNTFGHFLRVTTWGESHGRAVGCVIDGFPAGLEVDEEFIQREMERRRPGKKYTTQRKEVDRVEILSGVFEGLTTATPISMVVWNVDADSSAYESLKTVFRPGHADYTYWAKFGVRDWRGGGRASARETAARVAAGAMAKLLLRRYDVKVMGYAKEIAGVSCEVDDAEKAFERAERSPLRMPDERAEKEAEQRLKEAMSEGDSVGGVVEVVAKNVPAGLGEPVFGKLDAYLAYAVMGIPAVKGVEIGAGFEAARKRGSENNDPIVLKDGRIRFATNNAGGILGGISNGEDIVLRAAIKPTPSISKKQRTVDYEKMEEAEISVKGRHDPCIVPRAVPVVEAMVALVLADCMLMQGLIPRSLL.

Arg-46 is an NADP(+) binding site. Residues Arg-122 to Ser-124, Gly-282, Lys-297 to Ser-301, and Arg-324 each bind FMN.

It belongs to the chorismate synthase family. The cofactor is FMNH2.

It carries out the reaction 5-O-(1-carboxyvinyl)-3-phosphoshikimate = chorismate + phosphate. The protein operates within metabolic intermediate biosynthesis; chorismate biosynthesis; chorismate from D-erythrose 4-phosphate and phosphoenolpyruvate: step 7/7. Catalyzes the anti-1,4-elimination of the C-3 phosphate and the C-6 proR hydrogen from 5-enolpyruvylshikimate-3-phosphate (EPSP) to yield chorismate, which is the branch point compound that serves as the starting substrate for the three terminal pathways of aromatic amino acid biosynthesis. This reaction introduces a second double bond into the aromatic ring system. This is Chorismate synthase from Archaeoglobus fulgidus (strain ATCC 49558 / DSM 4304 / JCM 9628 / NBRC 100126 / VC-16).